Consider the following 323-residue polypeptide: Homoserine kinase (323 aa).

This sequence belongs to the pseudomonas-type ThrB family.

It carries out the reaction L-homoserine + ATP = O-phospho-L-homoserine + ADP + H(+). It participates in amino-acid biosynthesis; L-threonine biosynthesis; L-threonine from L-aspartate: step 4/5. This chain is Homoserine kinase, found in Phenylobacterium zucineum (strain HLK1).